Consider the following 349-residue polypeptide: N-acetyltaurine hydrolase (349 aa).

A divalent metal cation is bound by residues His26, His28, Glu169, His201, His230, and Asp298.

This sequence belongs to the metallo-dependent hydrolases superfamily. Phosphotriesterase family. A divalent metal cation is required as a cofactor.

It is found in the cytoplasm. The protein localises to the cytosol. The enzyme catalyses N-acetyltaurine + H2O = taurine + acetate. The catalysed reaction is N-propanoyltaurine + H2O = propanoate + taurine. It carries out the reaction N-acetyl-L-methionine + H2O = L-methionine + acetate. It catalyses the reaction N-acetyl-L-isoleucine + H2O = L-isoleucine + acetate. The enzyme catalyses N-acetyl-L-leucine + H2O = L-leucine + acetate. The catalysed reaction is N-acetyl-L-valine + H2O = L-valine + acetate. In terms of biological role, N-acetyltaurine hydrolase that catalyzes the hydrolysis of N-acetyltaurine into taurine and acetate. PTER also acts on other N-acetyl amino acids (Met, Ile, Leu, Val) and N-propionyltaurine, but at lower rates. This is N-acetyltaurine hydrolase (pter) from Danio rerio (Zebrafish).